Reading from the N-terminus, the 176-residue chain is Nudix hydrolase 18, mitochondrial (176 aa).

The N-terminal 21 residues, 1–21 (MVCLVSRTGRQSQRYNKGRRQ), are a transit peptide targeting the mitochondrion. The region spanning 22–153 (VVGCIPYRLK…WMKEALDVLV (132 aa)) is the Nudix hydrolase domain. The short motif at 60–81 (GGWELDESVEEAASRESLEEAG) is the Nudix box element. 2 residues coordinate Mg(2+): E75 and E79.

It belongs to the Nudix hydrolase family. Requires Mg(2+) as cofactor. Mn(2+) serves as cofactor. As to expression, expressed in roots, stems and inflorescences.

The protein resides in the mitochondrion. Probably mediates the hydrolysis of some nucleoside diphosphate derivatives. The polypeptide is Nudix hydrolase 18, mitochondrial (NUDT18) (Arabidopsis thaliana (Mouse-ear cress)).